The sequence spans 91 residues: Small ribosomal subunit protein uS17 (91 aa).

The protein belongs to the universal ribosomal protein uS17 family. In terms of assembly, part of the 30S ribosomal subunit.

One of the primary rRNA binding proteins, it binds specifically to the 5'-end of 16S ribosomal RNA. This Salinispora tropica (strain ATCC BAA-916 / DSM 44818 / JCM 13857 / NBRC 105044 / CNB-440) protein is Small ribosomal subunit protein uS17.